The primary structure comprises 129 residues: Small ribosomal subunit protein uS11 (129 aa).

It belongs to the universal ribosomal protein uS11 family. In terms of assembly, part of the 30S ribosomal subunit. Interacts with proteins S7 and S18. Binds to IF-3.

In terms of biological role, located on the platform of the 30S subunit, it bridges several disparate RNA helices of the 16S rRNA. Forms part of the Shine-Dalgarno cleft in the 70S ribosome. This Paracoccus denitrificans (strain Pd 1222) protein is Small ribosomal subunit protein uS11.